The following is a 306-amino-acid chain: Probable protein ABIL1 (306 aa).

A disordered region spans residues 200-236; the sequence is KNSKTNGARQSEFVLEETKATKPASRGKEPSTSPLPK.

This sequence belongs to the ABI family. As to quaternary structure, binds SCAR.

The protein resides in the cytoplasm. The protein localises to the cytoskeleton. Involved in regulation of actin and microtubule organization. Part of a WAVE complex that activates the Arp2/3 complex. The chain is Probable protein ABIL1 from Oryza sativa subsp. japonica (Rice).